The following is a 227-amino-acid chain: Ribose-5-phosphate isomerase A (227 aa).

Substrate is bound by residues 28–31, 84–87, and 97–100; these read TGST, DGAD, and KGGG. Glu106 functions as the Proton acceptor in the catalytic mechanism. Position 124 (Lys124) interacts with substrate.

The protein belongs to the ribose 5-phosphate isomerase family. In terms of assembly, homodimer.

It catalyses the reaction aldehydo-D-ribose 5-phosphate = D-ribulose 5-phosphate. It functions in the pathway carbohydrate degradation; pentose phosphate pathway; D-ribose 5-phosphate from D-ribulose 5-phosphate (non-oxidative stage): step 1/1. Its function is as follows. Catalyzes the reversible conversion of ribose-5-phosphate to ribulose 5-phosphate. This Lactiplantibacillus plantarum (strain ATCC BAA-793 / NCIMB 8826 / WCFS1) (Lactobacillus plantarum) protein is Ribose-5-phosphate isomerase A.